Reading from the N-terminus, the 31-residue chain is Cytochrome b6-f complex subunit 6 (31 aa).

Residues 3-23 (ILIGYIILLACAFGLAAGLFF) form a helical membrane-spanning segment.

It belongs to the PetL family. As to quaternary structure, the 4 large subunits of the cytochrome b6-f complex are cytochrome b6, subunit IV (17 kDa polypeptide, PetD), cytochrome f and the Rieske protein, while the 4 small subunits are PetG, PetL, PetM and PetN. The complex functions as a dimer.

It is found in the plastid. Its subcellular location is the chloroplast thylakoid membrane. Functionally, component of the cytochrome b6-f complex, which mediates electron transfer between photosystem II (PSII) and photosystem I (PSI), cyclic electron flow around PSI, and state transitions. PetL is important for photoautotrophic growth as well as for electron transfer efficiency and stability of the cytochrome b6-f complex. The chain is Cytochrome b6-f complex subunit 6 from Rhodomonas salina (Cryptomonas salina).